The following is a 249-amino-acid chain: Derlin-2.2 (249 aa).

Residues 1–21 are Cytoplasmic-facing; the sequence is MAQAVEEWYRQMPIITRSYLT. The helical transmembrane segment at 22 to 42 threads the bilayer; that stretch reads AAVVTTVGCTLEIISPYHLYL. Residues 43–96 are Lumenal-facing; the sequence is NPKLVVQHYEIWRLVTNFLYFRKMDLDFLFHMFFLARYCKLLEENSFRGRTADF. Residues 97-117 traverse the membrane as a helical segment; that stretch reads FYMLLFGATVLTGIVLIGGMI. The Cytoplasmic portion of the chain corresponds to 118 to 122; the sequence is PYISE. The chain crosses the membrane as a helical span at residues 123-143; sequence TFARILFLSNSLTFMMVYVWS. The Lumenal portion of the chain corresponds to 144 to 152; sequence KHNPFIHMS. Residues 153–173 form a helical membrane-spanning segment; that stretch reads FLGLFTFTAAYLPWVLLGFSI. The Cytoplasmic segment spans residues 174-249; sequence LVGSSTWVDL…GAIGVDPQAQ (76 aa).

It belongs to the derlin family. As to expression, expressed in roots, stalks, leaves, immature ears, embryo and endosperm.

Its subcellular location is the endoplasmic reticulum membrane. Functionally, may be involved in the degradation process of specific misfolded endoplasmic reticulum (ER) luminal proteins. The sequence is that of Derlin-2.2 (DER2.2) from Zea mays (Maize).